The following is a 357-amino-acid chain: Outer membrane porin protein OmpD (357 aa).

The first 21 residues, 1–21, serve as a signal peptide directing secretion; the sequence is MKLKLVAVAVTTLLAAGAVNA.

The protein belongs to the Gram-negative porin family. In terms of assembly, homotrimer.

It is found in the cell outer membrane. Forms pores that allow passive diffusion of small molecules across the outer membrane. This is Outer membrane porin protein OmpD (ompD) from Citrobacter koseri (strain ATCC BAA-895 / CDC 4225-83 / SGSC4696).